We begin with the raw amino-acid sequence, 205 residues long: Keratin-associated protein 4-6 (205 aa).

30 tandem repeats follow at residues 20-24 (CCRPS), 25-29 (CCQTT), 30-34 (CCRTT), 35-39 (CCRPS), 40-44 (CCVSS), 45-49 (CCRPQ), 50-54 (CCQSV), 55-59 (CCQPT), 60-64 (CCRPS), 65-68 (CCPS), 69-73 (CCQTT), 74-78 (CCRTT), 79-83 (CCRPS), 84-88 (CCVSS), 89-93 (CCRPQ), 94-98 (CCQSV), 99-103 (CCQPT), 104-108 (CCRPS), 114-118 (CCRPS), 119-123 (CCVSR), 124-128 (CCRSQ), 129-133 (CCQSV), 134-138 (CCQPT), 139-143 (CCRPS), 144-148 (CCISS), 149-153 (CCRPS), 154-158 (CCESS), 159-163 (CCRPC), 164-168 (CCRPC), and 169-173 (CCLRP). The interval 20–173 (CCRPSCCQTT…CCRPCCCLRP (154 aa)) is 30 X 5 AA repeats of C-C-[IRQVEL]-[SPTR]-[STVQRCP].

The protein belongs to the KRTAP type 4 family. In terms of assembly, interacts with hair keratins. Expressed in the hair follicles.

In the hair cortex, hair keratin intermediate filaments are embedded in an interfilamentous matrix, consisting of hair keratin-associated proteins (KRTAP), which are essential for the formation of a rigid and resistant hair shaft through their extensive disulfide bond cross-linking with abundant cysteine residues of hair keratins. The matrix proteins include the high-sulfur and high-glycine-tyrosine keratins. The protein is Keratin-associated protein 4-6 (KRTAP4-6) of Homo sapiens (Human).